The sequence spans 342 residues: Keratin-associated protein 29-1 (342 aa).

Repeat copies occupy residues Cys-5–Asn-9, Cys-91–Asp-95, Cys-239–Pro-243, Cys-309–Gly-313, and Cys-324–Thr-328. The segment at Cys-5–Thr-328 is 5 X 5 AA repeats of C-C-X(3).

The protein belongs to the KRTAP type 10 family.

In Mus musculus (Mouse), this protein is Keratin-associated protein 29-1 (Krtap29-1).